The chain runs to 521 residues: Cytokinin dehydrogenase 9 (521 aa).

Positions methionine 1–threonine 22 are cleaved as a signal peptide. Asparagine 57 carries N-linked (GlcNAc...) asparagine glycosylation. An FAD-binding PCMH-type domain is found at serine 59–alanine 237. 3 residues coordinate FAD: alanine 95, glycine 97, and glycine 99. Pros-8alpha-FAD histidine is present on histidine 100. Positions 101, 105, 161, 166, 172, 176, and 227 each coordinate FAD. N-linked (GlcNAc...) asparagine glycosylation is found at asparagine 278, asparagine 412, and asparagine 418. Residue tyrosine 469 participates in FAD binding. Asparagine 472 carries an N-linked (GlcNAc...) asparagine glycan. An FAD-binding site is contributed by glutamine 507.

Belongs to the oxygen-dependent FAD-linked oxidoreductase family. As to quaternary structure, monomer. FAD serves as cofactor. Expressed in inflorescence meristems.

It is found in the secreted. It localises to the extracellular space. The protein resides in the cytoplasm. Its subcellular location is the cytosol. The protein localises to the nucleus. It catalyses the reaction N(6)-dimethylallyladenine + A + H2O = 3-methyl-2-butenal + adenine + AH2. Its function is as follows. Catalyzes the oxidation of cytokinins, a family of N(6)-substituted adenine derivatives that are plant hormones, where the substituent is an isopentenyl group. Possesses cytokinin oxidase activity toward trans-zeatin (tZ) and N6-(2-isopentenyl)adenine (2iP) in vitro. Functions as a primary strigolactone-responsive gene to regulate rice tillering, plant height, and panicle size, likely via a secondary response gene, RR5, which encodes a cytokinin-inducible rice type-A response regulator that seems to act as negative regulator of the cytokinin signaling. The polypeptide is Cytokinin dehydrogenase 9 (Oryza sativa subsp. japonica (Rice)).